We begin with the raw amino-acid sequence, 419 residues long: F-box/FBD/LRR-repeat protein At4g26340 (419 aa).

In terms of domain architecture, F-box spans 1-53; it reads MDRISQLSDDLLLQILSFIPGKDVVATSLLSKRWQSLWMLVSELEYDDSYHTG. 7 LRR repeats span residues 55–81, 132–159, 160–185, 187–208, 226–253, 254–284, and 299–324; these read YKSFSQFVYRSLLSNNAPVIKHLHLNL, TLRLINFVLLDVPSSVCLPSLKVLHLKT, VDYEDDASLPSLLFGCPNLEELFVER, DQDLEMDVTFVVPSLRRLSMID, YLNITDDAVYDVRQIENMPELVEAHVDI, TQGVTHKFLRALTSVRQLSLCLSLSEVMCPS, and VVKGWWDLLTSMLQDSPKLQSLKLID. Positions 339 to 389 constitute an FBD domain; sequence GWKLPSSVPECLLFSLEAFEWIGYKGRRGDREVATYVLKNAACLRTAKFSP.

This is F-box/FBD/LRR-repeat protein At4g26340 from Arabidopsis thaliana (Mouse-ear cress).